Here is a 312-residue protein sequence, read N- to C-terminus: Acetaldehyde dehydrogenase (312 aa).

Residue 12–15 (SGNI) participates in NAD(+) binding. Residue Cys132 is the Acyl-thioester intermediate of the active site. NAD(+) is bound by residues 163-171 (SAGPGTRAN) and Asn290.

This sequence belongs to the acetaldehyde dehydrogenase family. Heterotetramer composed of two DmpG (aldolase) and two DmpF (dehydrogenase) subunits, which allows a direct channeling of acetaldehyde between the two active sites.

The catalysed reaction is acetaldehyde + NAD(+) + CoA = acetyl-CoA + NADH + H(+). It functions in the pathway aromatic compound metabolism; phenol degradation. Its activity is regulated as follows. Is not activated by Mn(2+), Mg(2+), Ca(2+), Zn(2+) or Co(2+). In terms of biological role, catalyzes the conversion of acetaldehyde to acetyl-CoA, using NAD(+) and coenzyme A. Can also act on propanal and butanal to form propanoyl-CoA and butanoyl-CoA, respectively. Is the final enzyme in the meta-cleavage pathway for the degradation of aromatic compounds such as phenols, cresols and catechols. NADP(+) can replace NAD(+) but the rate of reaction is much slower. The polypeptide is Acetaldehyde dehydrogenase (dmpF) (Pseudomonas sp. (strain CF600)).